The sequence spans 342 residues: Ketol-acid reductoisomerase (NADP(+)) (342 aa).

Positions 2 to 182 constitute a KARI N-terminal Rossmann domain; the sequence is AKIYYDDDAD…GGLRAGGIET (181 aa). NADP(+) contacts are provided by residues 25-28, Arg-48, Ser-51, Ser-53, and 83-86; these read YGSQ and DQNQ. His-108 is an active-site residue. Gly-134 is an NADP(+) binding site. One can recognise a KARI C-terminal knotted domain in the interval 183–328; that stretch reads SFREETETDL…KELRKMYSWL (146 aa). Residues Asp-191, Glu-195, Glu-227, and Glu-231 each contribute to the Mg(2+) site. Residue Ser-252 participates in substrate binding.

This sequence belongs to the ketol-acid reductoisomerase family. Requires Mg(2+) as cofactor.

It carries out the reaction (2R)-2,3-dihydroxy-3-methylbutanoate + NADP(+) = (2S)-2-acetolactate + NADPH + H(+). It catalyses the reaction (2R,3R)-2,3-dihydroxy-3-methylpentanoate + NADP(+) = (S)-2-ethyl-2-hydroxy-3-oxobutanoate + NADPH + H(+). It functions in the pathway amino-acid biosynthesis; L-isoleucine biosynthesis; L-isoleucine from 2-oxobutanoate: step 2/4. Its pathway is amino-acid biosynthesis; L-valine biosynthesis; L-valine from pyruvate: step 2/4. In terms of biological role, involved in the biosynthesis of branched-chain amino acids (BCAA). Catalyzes an alkyl-migration followed by a ketol-acid reduction of (S)-2-acetolactate (S2AL) to yield (R)-2,3-dihydroxy-isovalerate. In the isomerase reaction, S2AL is rearranged via a Mg-dependent methyl migration to produce 3-hydroxy-3-methyl-2-ketobutyrate (HMKB). In the reductase reaction, this 2-ketoacid undergoes a metal-dependent reduction by NADPH to yield (R)-2,3-dihydroxy-isovalerate. The polypeptide is Ketol-acid reductoisomerase (NADP(+)) (Cutibacterium acnes (strain DSM 16379 / KPA171202) (Propionibacterium acnes)).